We begin with the raw amino-acid sequence, 542 residues long: Putative sodium-dependent excitatory amino acid transporter glt-6 (542 aa).

The Cytoplasmic segment spans residues 1-15 (MKSKRRDDIVQFCRE). 3 consecutive transmembrane segments (helical) span residues 16-36 (NTLLVMTMFSVFLGVVLGFGL), 55-75 (IFMQVLKMMILPLIFSSLISA), and 93-113 (LYYLSTAVLATILGIFLVTVI). Topologically, residues 114–191 (HPGDPSIKGT…IVKRSIGMTK (78 aa)) are extracellular. The N-linked (GlcNAc...) asparagine glycan is linked to Asn-175. Helical transmembrane passes span 192-212 (GMNILGIIVFCTGFGIVISQL), 234-254 (VVTLMWFAPLGITCLICGNLL), 265-285 (VLALYVFTVCAGLILHTIITV), 303-323 (GMIQAAVTAFGTASGGATLPM), and 386-406 (TIASIGLGSVPAGLVSILLIL). Low complexity predominate over residues 505–517 (RIGSRIGSRRPSS). The segment at 505-542 (RIGSRIGSRRPSSTNLHLSWRNNNIEPPYTPLPNDENV) is disordered. Positions 518–529 (TNLHLSWRNNNI) are enriched in polar residues.

It belongs to the dicarboxylate/amino acid:cation symporter (DAACS) (TC 2.A.23) family.

It localises to the membrane. The chain is Putative sodium-dependent excitatory amino acid transporter glt-6 (glt-6) from Caenorhabditis elegans.